A 357-amino-acid polypeptide reads, in one-letter code: S-adenosylmethionine:tRNA ribosyltransferase-isomerase (357 aa).

The protein belongs to the QueA family. As to quaternary structure, monomer.

It localises to the cytoplasm. It carries out the reaction 7-aminomethyl-7-carbaguanosine(34) in tRNA + S-adenosyl-L-methionine = epoxyqueuosine(34) in tRNA + adenine + L-methionine + 2 H(+). It functions in the pathway tRNA modification; tRNA-queuosine biosynthesis. In terms of biological role, transfers and isomerizes the ribose moiety from AdoMet to the 7-aminomethyl group of 7-deazaguanine (preQ1-tRNA) to give epoxyqueuosine (oQ-tRNA). This Hamiltonella defensa subsp. Acyrthosiphon pisum (strain 5AT) protein is S-adenosylmethionine:tRNA ribosyltransferase-isomerase.